The chain runs to 131 residues: MSYRIGIDIESISDVQAAAEKHKQFLDKVLTKSEQKQLAGRKGNGYYAYLAGRFSSKEAYAKATGFGIGSKVNFTDIEILDDENGAPRLSVSGRSLFLNAKSYQISISHKIKLDLVATEVLIEVEDGNSDS.

2 residues coordinate Mg(2+): Asp-8 and Glu-58.

This sequence belongs to the P-Pant transferase superfamily. AcpS family. It depends on Mg(2+) as a cofactor.

It localises to the cytoplasm. The catalysed reaction is apo-[ACP] + CoA = holo-[ACP] + adenosine 3',5'-bisphosphate + H(+). In terms of biological role, transfers the 4'-phosphopantetheine moiety from coenzyme A to a Ser of acyl-carrier-protein. The sequence is that of Holo-[acyl-carrier-protein] synthase from Oenococcus oeni (strain ATCC BAA-331 / PSU-1).